The following is a 182-amino-acid chain: Core-binding factor subunit beta (182 aa).

Phosphoserine is present on A173.

It belongs to the CBF-beta family. Heterodimer with RUNX1, RUNX2 and RUNX3. Interacts with COPRS. Found in a complex with PRMT5 and RUNX1. In terms of assembly, (Microbial infection) Interacts with HIV-1 Vif; forming an active cullin-5-RING E3 ubiquitin-protein ligase complex (ECS complex).

The protein resides in the nucleus. Its function is as follows. Forms the heterodimeric complex core-binding factor (CBF) with RUNX family proteins (RUNX1, RUNX2, and RUNX3). RUNX members modulate the transcription of their target genes through recognizing the core consensus binding sequence 5'-TGTGGT-3', or very rarely, 5'-TGCGGT-3', within their regulatory regions via their runt domain, while CBFB is a non-DNA-binding regulatory subunit that allosterically enhances the sequence-specific DNA-binding capacity of RUNX. The heterodimers bind to the core site of a number of enhancers and promoters, including murine leukemia virus, polyomavirus enhancer, T-cell receptor enhancers, LCK, IL3 and GM-CSF promoters. CBF complexes repress ZBTB7B transcription factor during cytotoxic (CD8+) T cell development. They bind to RUNX-binding sequence within the ZBTB7B locus acting as transcriptional silencer and allowing for cytotoxic T cell differentiation. Functionally, (Microbial infection) Following infection, hijacked by the HIV-1 Vif protein, leading to the formation a cullin-5-RING E3 ubiquitin-protein ligase complex (ECS complex) that catalyzes ubiquitination and degradation of APOBEC3F and APOBEC3G. The complex can also ubiquitinate APOBEC3H to some extent. Association with HIV-1 Vif protein also inhibits the transcription coactivator activity of CBFB/CBF-beta. The polypeptide is Core-binding factor subunit beta (CBFB) (Homo sapiens (Human)).